We begin with the raw amino-acid sequence, 357 residues long: Protein-glutamate methylesterase/protein-glutamine glutaminase (357 aa).

Positions 3 to 120 constitute a Response regulatory domain; sequence RVIVVDDSAF…LASMDLAALS (118 aa). Position 54 is a 4-aspartylphosphate (Asp-54). In terms of domain architecture, CheB-type methylesterase spans 165-357; sequence ERSRRDIIAI…AERVASALYK (193 aa). Active-site residues include Ser-177, His-204, and Asp-300.

The protein belongs to the CheB family. In terms of processing, phosphorylated by CheA. Phosphorylation of the N-terminal regulatory domain activates the methylesterase activity.

It localises to the cytoplasm. It carries out the reaction [protein]-L-glutamate 5-O-methyl ester + H2O = L-glutamyl-[protein] + methanol + H(+). The catalysed reaction is L-glutaminyl-[protein] + H2O = L-glutamyl-[protein] + NH4(+). Functionally, involved in chemotaxis. Part of a chemotaxis signal transduction system that modulates chemotaxis in response to various stimuli. Catalyzes the demethylation of specific methylglutamate residues introduced into the chemoreceptors (methyl-accepting chemotaxis proteins or MCP) by CheR. Also mediates the irreversible deamidation of specific glutamine residues to glutamic acid. In Lawsonia intracellularis (strain PHE/MN1-00), this protein is Protein-glutamate methylesterase/protein-glutamine glutaminase.